Reading from the N-terminus, the 642-residue chain is MFSPPVSSGKNGPTSLASGHFTGSNVEDRSSSGSWGNGGHPSPSRNYGDGTPYDHMTSRDLGSHDNLSPPFVNSRIQSKTERGSYSSYGRESNLQGCHQSLLGGDMDMGTPGTLSPTKPGSQYYQYSSNNPRRRPLHSSAMEVQTKKVRKVPPGLPSSVYAPSASTADYNRDSPGYPSSKPAASTFPSSFFMQDGHHSSDPWSSSSGMNQPGYGGMLGSSSHIPQSSSYCSLHPHERLSYPSHSSADINSSLPPMSTFHRSGTNHYSTSSCTPPANGTDSIMANRGSGAAGSSQTGDALGKALASIYSPDHTNNSFSSNPSTPVGSPPSLSAGTAVWSRNGGQASSSPNYEGPLHSLQSRIEDRLERLDDAIHVLRNHAVGPSTAMPGGHGDMHGIIGPSHNGAMGGLGSGYGTGLLSANRHSLMVGAHREDGVALRGSHSLVPNQVPVPQLPVQSATSPDLNPPQDPYRGMPPGLQGQSVSSGSSEIKSDDEGDENLQDTKSSEDKKLDDDKKDIKSITSNNDDEDLTPEQKAEREKERRMANNARERLRVRDINEAFKELGRMVQLHLKSDKPQTKLLILHQAVAVILSLEQQVRERNLNPKAACLKRREEEKVSSEPPPLSLAGPHPGMGDASNHMGQM.

The segment covering 1-25 has biased composition (polar residues); sequence MFSPPVSSGKNGPTSLASGHFTGSN. The interval 1-59 is essential for MYOD1 inhibition; that stretch reads MFSPPVSSGKNGPTSLASGHFTGSNVEDRSSSGSWGNGGHPSPSRNYGDGTPYDHMTSR. 4 disordered regions span residues 1 to 296, 311 to 354, 444 to 545, and 609 to 642; these read MFSP…SQTG, HTNN…EGPL, PNQV…MANN, and KRRE…MGQM. Phosphoserine occurs at positions 42, 63, and 68. Polar residues-rich tracts occupy residues 83 to 98, 112 to 130, 181 to 191, 218 to 230, and 241 to 281; these read GSYS…QGCH, GTLS…SSNN, PAASTFPSSFF, GSSS…SSYC, and PSHS…TDSI. Residues 312 to 323 show a composition bias toward low complexity; it reads TNNSFSSNPSTP. A compositionally biased stretch (polar residues) spans 340-349; sequence NGGQASSSPN. Phosphoserine is present on serine 347. The leucine-zipper stretch occupies residues 354–375; it reads LHSLQSRIEDRLERLDDAIHVL. Low complexity-rich tracts occupy residues 444-455 and 478-487; these read PNQVPVPQLPVQ and GQSVSSGSSE. Position 490 is a phosphoserine (serine 490). Composition is skewed to basic and acidic residues over residues 502 to 517 and 530 to 545; these read KSSE…KDIK and PEQK…MANN. One can recognise a bHLH domain in the interval 539-592; it reads ERRMANNARERLRVRDINEAFKELGRMVQLHLKSDKPQTKLLILHQAVAVILSL. The tract at residues 594-617 is class A specific domain; sequence QQVRERNLNPKAACLKRREEEKVS.

As to quaternary structure, efficient DNA binding requires dimerization with another bHLH protein. Forms homo- or heterooligomers with myogenin. Interacts with HIVEP2. Interacts with NEUROD2. Interacts with AGBL1. Widely expressed.

The protein resides in the nucleus. Its function is as follows. Transcription factor that binds to the immunoglobulin enhancer Mu-E5/KE5-motif. Involved in the initiation of neuronal differentiation. Activates transcription by binding to the E box (5'-CANNTG-3'). Binds to the thyroglobulin promoter. The sequence is that of Transcription factor 4 (TCF4) from Canis lupus familiaris (Dog).